We begin with the raw amino-acid sequence, 357 residues long: Peptide chain release factor 1 (357 aa).

Q236 carries the N5-methylglutamine modification. The span at 284-293 (RRKKDQERAN) shows a compositional bias: basic and acidic residues. The segment at 284 to 313 (RRKKDQERANNRRKQIGSGDRSERIRTYNF) is disordered.

This sequence belongs to the prokaryotic/mitochondrial release factor family. Post-translationally, methylated by PrmC. Methylation increases the termination efficiency of RF1.

It is found in the cytoplasm. In terms of biological role, peptide chain release factor 1 directs the termination of translation in response to the peptide chain termination codons UAG and UAA. The polypeptide is Peptide chain release factor 1 (Rickettsia bellii (strain RML369-C)).